Here is a 339-residue protein sequence, read N- to C-terminus: uncharacterized protein (339 aa).

Residues 17–111 (VRGEIKCLDV…WEDLSLPQNE (95 aa)) form the Rhodanese domain.

This is an uncharacterized protein from Schizosaccharomyces pombe (strain 972 / ATCC 24843) (Fission yeast).